Here is a 211-residue protein sequence, read N- to C-terminus: Dephospho-CoA kinase (211 aa).

Positions 7–211 (LIGVIGRSGA…ILTRRGVLGE (205 aa)) constitute a DPCK domain. 15 to 20 (GAGKNV) is a binding site for ATP.

The protein belongs to the CoaE family.

The protein localises to the cytoplasm. It catalyses the reaction 3'-dephospho-CoA + ATP = ADP + CoA + H(+). The protein operates within cofactor biosynthesis; coenzyme A biosynthesis; CoA from (R)-pantothenate: step 5/5. Its function is as follows. Catalyzes the phosphorylation of the 3'-hydroxyl group of dephosphocoenzyme A to form coenzyme A. The chain is Dephospho-CoA kinase from Treponema pallidum (strain Nichols).